We begin with the raw amino-acid sequence, 443 residues long: Xaa-Pro dipeptidase (443 aa).

Residues Asp-244, Asp-255, His-336, Glu-381, and Glu-420 each contribute to the Mn(2+) site.

It belongs to the peptidase M24B family. Bacterial-type prolidase subfamily. It depends on Mn(2+) as a cofactor.

The enzyme catalyses Xaa-L-Pro dipeptide + H2O = an L-alpha-amino acid + L-proline. In terms of biological role, splits dipeptides with a prolyl residue in the C-terminal position. The sequence is that of Xaa-Pro dipeptidase from Stenotrophomonas maltophilia (strain R551-3).